A 272-amino-acid chain; its full sequence is MIFNLPVSVLLYFSLIWAMEPSFVRGKNVVNLITFKDSNGKLHKRLAPEEIPPRLHNSQVNSYPLGYKGMRDFSRPAVNLDDILGTQQRKQQEFLAELSPLSLESKLSLVNEVQIFASYVRNDVETYNKVSDPNEDLIIIAPTNRAVSQLTLKPWQFPNNIDKLESDGATEKELDTAIQENISKFVRSHIVVYNDDKNSYKKVSPGCTLLQSIDFTESKKSDSETGGDILLKKEGEVYYVASSRDEKFHAVESIENGSNGVILMVDFTLVGP.

A signal peptide spans 1–26 (MIFNLPVSVLLYFSLIWAMEPSFVRG). The region spanning 100 to 269 (PLSLESKLSL…GVILMVDFTL (170 aa)) is the FAS1 domain.

The protein resides in the vacuole. The chain is FAS1 domain-containing protein YDR262W from Saccharomyces cerevisiae (strain ATCC 204508 / S288c) (Baker's yeast).